Reading from the N-terminus, the 468-residue chain is Siroheme synthase (468 aa).

Positions 1–203 (MQYLPIFLNI…GQEEEAEGAL (203 aa)) are precorrin-2 dehydrogenase /sirohydrochlorin ferrochelatase. NAD(+) contacts are provided by residues 22–23 (TV) and 43–44 (PK). At serine 128 the chain carries Phosphoserine. The tract at residues 216–468 (GEVYLVGAGP…VPDREPLDAR (253 aa)) is uroporphyrinogen-III C-methyltransferase. Proline 225 contacts S-adenosyl-L-methionine. Aspartate 248 acts as the Proton acceptor in catalysis. The Proton donor role is filled by lysine 270. S-adenosyl-L-methionine is bound by residues 301 to 303 (GGD), isoleucine 306, 331 to 332 (TA), methionine 383, and glycine 412.

In the N-terminal section; belongs to the precorrin-2 dehydrogenase / sirohydrochlorin ferrochelatase family. It in the C-terminal section; belongs to the precorrin methyltransferase family.

It catalyses the reaction uroporphyrinogen III + 2 S-adenosyl-L-methionine = precorrin-2 + 2 S-adenosyl-L-homocysteine + H(+). It carries out the reaction precorrin-2 + NAD(+) = sirohydrochlorin + NADH + 2 H(+). The catalysed reaction is siroheme + 2 H(+) = sirohydrochlorin + Fe(2+). The protein operates within cofactor biosynthesis; adenosylcobalamin biosynthesis; precorrin-2 from uroporphyrinogen III: step 1/1. Its pathway is cofactor biosynthesis; adenosylcobalamin biosynthesis; sirohydrochlorin from precorrin-2: step 1/1. It functions in the pathway porphyrin-containing compound metabolism; siroheme biosynthesis; precorrin-2 from uroporphyrinogen III: step 1/1. It participates in porphyrin-containing compound metabolism; siroheme biosynthesis; siroheme from sirohydrochlorin: step 1/1. The protein operates within porphyrin-containing compound metabolism; siroheme biosynthesis; sirohydrochlorin from precorrin-2: step 1/1. Functionally, multifunctional enzyme that catalyzes the SAM-dependent methylations of uroporphyrinogen III at position C-2 and C-7 to form precorrin-2 via precorrin-1. Then it catalyzes the NAD-dependent ring dehydrogenation of precorrin-2 to yield sirohydrochlorin. Finally, it catalyzes the ferrochelation of sirohydrochlorin to yield siroheme. The protein is Siroheme synthase of Nitrosococcus oceani (strain ATCC 19707 / BCRC 17464 / JCM 30415 / NCIMB 11848 / C-107).